Consider the following 283-residue polypeptide: Pantothenate synthetase (283 aa).

30 to 37 contacts ATP; the sequence is MGYLHEGH. Histidine 37 functions as the Proton donor in the catalytic mechanism. Position 61 (glutamine 61) interacts with (R)-pantoate. Glutamine 61 contributes to the beta-alanine binding site. Residue 147 to 150 coordinates ATP; it reads GQKD. (R)-pantoate is bound at residue glutamine 153. Residues valine 176 and 184-187 contribute to the ATP site; that span reads MSSR.

This sequence belongs to the pantothenate synthetase family. As to quaternary structure, homodimer.

It is found in the cytoplasm. The catalysed reaction is (R)-pantoate + beta-alanine + ATP = (R)-pantothenate + AMP + diphosphate + H(+). It participates in cofactor biosynthesis; (R)-pantothenate biosynthesis; (R)-pantothenate from (R)-pantoate and beta-alanine: step 1/1. In terms of biological role, catalyzes the condensation of pantoate with beta-alanine in an ATP-dependent reaction via a pantoyl-adenylate intermediate. This Thermoanaerobacter sp. (strain X514) protein is Pantothenate synthetase.